The primary structure comprises 920 residues: WD repeat-containing protein 47 (920 aa).

In terms of domain architecture, LisH spans Lys-10–Asn-42. A CTLH domain is found at Phe-45 to Ser-102. Position 285 is a phosphothreonine (Thr-285). Ser-289, Ser-292, Ser-297, and Ser-312 each carry phosphoserine. Basic and acidic residues predominate over residues Tyr-371–Thr-380. The interval Tyr-371–Asp-422 is disordered. Phosphoserine is present on Ser-423. Positions Leu-501 to Ser-594 are disordered. Residues Ser-506–Thr-523 are compositionally biased toward low complexity. Over residues Asn-538–His-552 the composition is skewed to polar residues. Phosphothreonine is present on Thr-543. WD repeat units lie at residues Glu-605 to Ala-644, His-660 to Thr-699, Met-707 to Leu-749, Gly-754 to Val-792, Gly-799 to Ser-838, Pro-841 to Leu-880, and Glu-887 to Ser-919.

As to quaternary structure, interacts with MAP1S (via WD repeats). Enriched in the nervous system (at protein level).

Its subcellular location is the cytoplasm. The protein resides in the cytoskeleton. In Mus musculus (Mouse), this protein is WD repeat-containing protein 47 (Wdr47).